The chain runs to 232 residues: Ovalbumin-related protein X (232 aa).

Belongs to the serpin family. Ov-serpin subfamily. In terms of tissue distribution, expressed in egg white (at protein level).

The sequence is that of Ovalbumin-related protein X (SERPINB14C) from Gallus gallus (Chicken).